The primary structure comprises 544 residues: Hydroxylamine reductase (544 aa).

[4Fe-4S] cluster-binding residues include cysteine 3, cysteine 6, cysteine 15, and cysteine 21. Hybrid [4Fe-2O-2S] cluster-binding residues include histidine 244, glutamate 268, cysteine 313, cysteine 400, cysteine 428, cysteine 453, glutamate 487, and lysine 489. Position 400 is a cysteine persulfide (cysteine 400).

This sequence belongs to the HCP family. The cofactor is [4Fe-4S] cluster. Hybrid [4Fe-2O-2S] cluster serves as cofactor.

It is found in the cytoplasm. The catalysed reaction is A + NH4(+) + H2O = hydroxylamine + AH2 + H(+). In terms of biological role, catalyzes the reduction of hydroxylamine to form NH(3) and H(2)O. This Trichormus variabilis (strain ATCC 29413 / PCC 7937) (Anabaena variabilis) protein is Hydroxylamine reductase.